The sequence spans 565 residues: Formate--tetrahydrofolate ligase (565 aa).

T67–T74 contacts ATP.

This sequence belongs to the formate--tetrahydrofolate ligase family.

It catalyses the reaction (6S)-5,6,7,8-tetrahydrofolate + formate + ATP = (6R)-10-formyltetrahydrofolate + ADP + phosphate. Its pathway is one-carbon metabolism; tetrahydrofolate interconversion. This chain is Formate--tetrahydrofolate ligase, found in Saccharopolyspora erythraea (strain ATCC 11635 / DSM 40517 / JCM 4748 / NBRC 13426 / NCIMB 8594 / NRRL 2338).